The following is a 544-amino-acid chain: Chaperonin GroEL 1 (544 aa).

ATP contacts are provided by residues 30–33 (TLGP), lysine 51, 87–91 (DGTTT), glycine 415, 481–483 (DAL), and aspartate 497.

This sequence belongs to the chaperonin (HSP60) family. Forms a cylinder of 14 subunits composed of two heptameric rings stacked back-to-back. Interacts with the co-chaperonin GroES.

The protein localises to the cytoplasm. The catalysed reaction is ATP + H2O + a folded polypeptide = ADP + phosphate + an unfolded polypeptide.. Its function is as follows. Together with its co-chaperonin GroES, plays an essential role in assisting protein folding. The GroEL-GroES system forms a nano-cage that allows encapsulation of the non-native substrate proteins and provides a physical environment optimized to promote and accelerate protein folding. This is Chaperonin GroEL 1 from Chlamydia pneumoniae (Chlamydophila pneumoniae).